A 359-amino-acid polypeptide reads, in one-letter code: Guanine nucleotide-binding protein subunit alpha-11 (359 aa).

2 S-palmitoyl cysteine lipidation sites follow: Cys9 and Cys10. Positions 38–359 (RELKLLLLGT…QLNLKEYNLV (322 aa)) constitute a G-alpha domain. A G1 motif region spans residues 41-54 (KLLLLGTGESGKST). Residues 46 to 53 (GTGESGKS) and 180 to 183 (LRVR) each bind GTP. Ser53 lines the Mg(2+) pocket. The segment at 178-186 (DVLRVRVPT) is G2 motif. Position 186 (Thr186) interacts with Mg(2+). The G3 motif stretch occupies residues 201-210 (FRMVDVGGQR). Gln209 carries the deamidated glutamine; by Photorhabdus PAU_02230 modification. The G4 motif stretch occupies residues 270-277 (ILFLNKKD). GTP contacts are provided by residues 274 to 277 (NKKD) and Ala331. Residues 329–334 (TCATDT) are G5 motif.

The protein belongs to the G-alpha family. G(q) subfamily. In terms of assembly, g proteins are composed of 3 units; alpha, beta and gamma. The alpha chain contains the guanine nucleotide binding site. Interacts with RGS22. Interacts with NTSR1. (Microbial infection) Interacts with human cytomegalovirus (HHV-5) US28. In terms of processing, (Microbial infection) Deamidated at Gln-209 by Photorhabdus asymbiotica toxin PAU_02230, blocking GTP hydrolysis of heterotrimeric GNAQ or GNA11 and G-alphai (GNAI1, GNAI2 or GNAI3) proteins, thereby activating RhoA. As to expression, expressed in testis.

It is found in the cell membrane. The protein localises to the cytoplasm. It catalyses the reaction GTP + H2O = GDP + phosphate + H(+). In terms of biological role, guanine nucleotide-binding proteins (G proteins) function as transducers downstream of G protein-coupled receptors (GPCRs) in numerous signaling cascades. The alpha chain contains the guanine nucleotide binding site and alternates between an active, GTP-bound state and an inactive, GDP-bound state. Signaling by an activated GPCR promotes GDP release and GTP binding. The alpha subunit has a low GTPase activity that converts bound GTP to GDP, thereby terminating the signal. Both GDP release and GTP hydrolysis are modulated by numerous regulatory proteins. Signaling is mediated via phospholipase C-beta-dependent inositol lipid hydrolysis for signal propagation: activates phospholipase C-beta: following GPCR activation, GNA11 activates PLC-beta (PLCB1, PLCB2, PLCB3 or PLCB4), leading to production of diacylglycerol (DAG) and inositol 1,4,5-trisphosphate (IP3). Transduces FFAR4 signaling in response to long-chain fatty acids (LCFAs). Together with GNAQ, required for heart development. In the respiratory epithelium, transmits OXGR1-dependent signals that lead to downstream intracellular Ca(2+) release and mucocilliary clearance of airborne pathogens. The sequence is that of Guanine nucleotide-binding protein subunit alpha-11 (GNA11) from Homo sapiens (Human).